We begin with the raw amino-acid sequence, 190 residues long: Surfactant protein C (190 aa).

Residues 1 to 23 constitute a propeptide that is removed on maturation; sequence MDVGSKEVLIENPPDYSAAPQGR. Cysteine 28 carries the S-palmitoyl cysteine lipid modification. The propeptide occupies 59 to 190; it reads HMSQKHTEMV…LCGEVPLYYI (132 aa). The BRICHOS domain occupies 94-190; that stretch reads FSIGSTGIVV…LCGEVPLYYI (97 aa). Cysteine 121 and cysteine 182 are joined by a disulfide.

The protein localises to the secreted. It is found in the extracellular space. Its subcellular location is the surface film. Its function is as follows. Pulmonary surfactant associated proteins promote alveolar stability by lowering the surface tension at the air-liquid interface in the peripheral air spaces. The polypeptide is Surfactant protein C (SFTPC) (Neovison vison (American mink)).